Reading from the N-terminus, the 366-residue chain is 5-formaminoimidazole-4-carboxamide-1-(beta)-D-ribofuranosyl 5'-monophosphate synthetase (366 aa).

5-amino-1-(5-phospho-beta-D-ribosyl)imidazole-4-carboxamide contacts are provided by His-27 and Ser-96. Residues 131–357 enclose the ATP-grasp domain; the sequence is RKWLEDAGVP…IAREIKEAVK (227 aa). ATP contacts are provided by residues 154-208 and Glu-239; that span reads PVIV…VRFY. Asn-263 lines the 5-amino-1-(5-phospho-beta-D-ribosyl)imidazole-4-carboxamide pocket. Glu-302 and Glu-315 together coordinate Mg(2+).

It belongs to the phosphohexose mutase family. Mg(2+) serves as cofactor. It depends on Mn(2+) as a cofactor.

It catalyses the reaction 5-amino-1-(5-phospho-beta-D-ribosyl)imidazole-4-carboxamide + formate + ATP = 5-formamido-1-(5-phospho-D-ribosyl)imidazole-4-carboxamide + ADP + phosphate. It functions in the pathway purine metabolism; IMP biosynthesis via de novo pathway; 5-formamido-1-(5-phospho-D-ribosyl)imidazole-4-carboxamide from 5-amino-1-(5-phospho-D-ribosyl)imidazole-4-carboxamide (formate route): step 1/1. Catalyzes the ATP- and formate-dependent formylation of 5-aminoimidazole-4-carboxamide-1-beta-d-ribofuranosyl 5'-monophosphate (AICAR) to 5-formaminoimidazole-4-carboxamide-1-beta-d-ribofuranosyl 5'-monophosphate (FAICAR) in the absence of folates. The chain is 5-formaminoimidazole-4-carboxamide-1-(beta)-D-ribofuranosyl 5'-monophosphate synthetase from Korarchaeum cryptofilum (strain OPF8).